Reading from the N-terminus, the 452-residue chain is Lysine-rich nucleolar protein 1 (452 aa).

Disordered regions lie at residues 1–28 (MITK…VKEP), 55–161 (VIQE…AFSG), and 184–305 (REQA…PDTD). Lys7 participates in a covalent cross-link: Glycyl lysine isopeptide (Lys-Gly) (interchain with G-Cter in SUMO2). A compositionally biased stretch (basic residues) spans 65–75 (LVKKKKKKKGH). Residues 78–98 (ICEEHLEPEITLRAGRTERSH) show a composition bias toward basic and acidic residues. Ser112 bears the Phosphoserine mark. Lys126 participates in a covalent cross-link: Glycyl lysine isopeptide (Lys-Gly) (interchain with G-Cter in SUMO2). Positions 127 to 139 (TSPDPRQDEEVTR) are enriched in basic and acidic residues. Residue Ser128 is modified to Phosphoserine. 2 stretches are compositionally biased toward basic residues: residues 140–151 (VGKKLKKHKKEK) and 258–267 (SVKKKVKSKK). A Phosphoserine modification is found at Ser258. Lys280 participates in a covalent cross-link: Glycyl lysine isopeptide (Lys-Gly) (interchain with G-Cter in SUMO2). Residues 293–305 (VAEEPWEEEPDTD) show a composition bias toward acidic residues. The tract at residues 300–452 (EEPDTDLEVV…NASKSIKFED (153 aa)) is interaction with ZNF106. Thr304 bears the Phosphothreonine mark. Glycyl lysine isopeptide (Lys-Gly) (interchain with G-Cter in SUMO2) cross-links involve residues Lys313, Lys347, Lys367, Lys369, and Lys401. An Omega-N-methylarginine modification is found at Arg424. Residue Lys436 forms a Glycyl lysine isopeptide (Lys-Gly) (interchain with G-Cter in SUMO2) linkage.

In terms of assembly, interacts with ZNF106.

The protein resides in the nucleus. It localises to the nucleolus. This chain is Lysine-rich nucleolar protein 1 (KNOP1), found in Bos taurus (Bovine).